A 47-amino-acid polypeptide reads, in one-letter code: Large ribosomal subunit protein bL34 (47 aa).

It belongs to the bacterial ribosomal protein bL34 family.

This is Large ribosomal subunit protein bL34 (rpmH) from Mycolicibacterium smegmatis (strain ATCC 700084 / mc(2)155) (Mycobacterium smegmatis).